Here is a 622-residue protein sequence, read N- to C-terminus: TAF6-like RNA polymerase II p300/CBP-associated factor-associated factor 65 kDa subunit 6L (622 aa).

2 disordered regions span residues 403–430 (QESS…GPED) and 457–546 (GTGQ…TRDV). Residues S495 and S501 each carry the phosphoserine modification. Residues 511-522 (ASASGPAASESR) are compositionally biased toward low complexity. Asymmetric dimethylarginine occurs at positions 555, 561, and 593.

It belongs to the TAF6 family. In terms of assembly, the PCAF complex is composed of a number of TBP-associated factors (TAFS), such as TAF5, TAF5L, TAF6, TAF6L, TAF9, TAF10 and TAF12, PCAF, and also PCAF-associated factors (PAFs), such as TADA2L/ADA2, TADA3L/ADA3 and SPT3. Component of the STAGA transcription coactivator-HAT complex, at least composed of SUPT3H, GCN5L2, TAF5L, TAF6L, SUPT7L, TADA3L, TAD1L, TAF10, TAF12, TRRAP and TAF9.

Its subcellular location is the nucleus. Functionally, functions as a component of the PCAF complex. The PCAF complex is capable of efficiently acetylating histones in a nucleosomal context. The PCAF complex could be considered as the human version of the yeast SAGA complex. With TAF5L, acts as an epigenetic regulator essential for somatic reprogramming. Regulates target genes through H3K9ac deposition and MYC recruitment which trigger MYC regulatory network to orchestrate gene expression programs to control embryonic stem cell state. Functions with MYC to activate target gene expression through RNA polymerase II pause release. The sequence is that of TAF6-like RNA polymerase II p300/CBP-associated factor-associated factor 65 kDa subunit 6L from Homo sapiens (Human).